The sequence spans 269 residues: Chromosome-partitioning protein Spo0J (269 aa).

The interval 1–20 (MSRKPSGLGRGLEALLPKTG) is stimulates ATPase activity of Soj by 8%. The H-T-H motif DNA-binding region spans 137–156 (QEEVARRVGKARSTVANALR). The required for DNA-binding; may be responsible for dimerization stretch occupies residues 223–269 (PSPLSLELSRHLGLPVRVVGGKKGKVVIQYRSLEELEALLRRLGYQA).

The protein belongs to the ParB family. As to quaternary structure, homodimer, probably via the C-terminal 46 residues. Dimerization of the N-terminal H-T-H region may require DNA-binding. Probably interacts with ATPase Soj.

Functionally, probably involved in chromosome partitioning. Binds to a plasmid centromere-like site parS. Stimulates the ATPase activity 10-fold of Soj; the first 20 residues may be responsible. The sequence is that of Chromosome-partitioning protein Spo0J (spo0C) from Thermus thermophilus (strain ATCC BAA-163 / DSM 7039 / HB27).